Consider the following 217-residue polypeptide: Uracil-DNA glycosylase (217 aa).

Residue Asp-62 is the Proton acceptor of the active site.

It belongs to the uracil-DNA glycosylase (UDG) superfamily. UNG family.

The protein localises to the cytoplasm. The catalysed reaction is Hydrolyzes single-stranded DNA or mismatched double-stranded DNA and polynucleotides, releasing free uracil.. Functionally, excises uracil residues from the DNA which can arise as a result of misincorporation of dUMP residues by DNA polymerase or due to deamination of cytosine. The protein is Uracil-DNA glycosylase of Streptococcus equi subsp. zooepidemicus (strain MGCS10565).